Consider the following 302-residue polypeptide: Sulfate adenylyltransferase subunit 2 (302 aa).

It belongs to the PAPS reductase family. CysD subfamily. As to quaternary structure, heterodimer composed of CysD, the smaller subunit, and CysN.

It catalyses the reaction sulfate + ATP + H(+) = adenosine 5'-phosphosulfate + diphosphate. It functions in the pathway sulfur metabolism; hydrogen sulfide biosynthesis; sulfite from sulfate: step 1/3. Functionally, with CysN forms the ATP sulfurylase (ATPS) that catalyzes the adenylation of sulfate producing adenosine 5'-phosphosulfate (APS) and diphosphate, the first enzymatic step in sulfur assimilation pathway. APS synthesis involves the formation of a high-energy phosphoric-sulfuric acid anhydride bond driven by GTP hydrolysis by CysN coupled to ATP hydrolysis by CysD. The polypeptide is Sulfate adenylyltransferase subunit 2 (Shewanella pealeana (strain ATCC 700345 / ANG-SQ1)).